The primary structure comprises 390 residues: DNA polymerase IV (390 aa).

One can recognise a UmuC domain in the interval 6 to 187 (VMHVDLDAFF…LDISIMPGIG (182 aa)). Mg(2+)-binding residues include D10 and D105. E106 is an active-site residue.

The protein belongs to the DNA polymerase type-Y family. In terms of assembly, monomer. Requires Mg(2+) as cofactor.

It localises to the cytoplasm. The catalysed reaction is DNA(n) + a 2'-deoxyribonucleoside 5'-triphosphate = DNA(n+1) + diphosphate. Its function is as follows. Poorly processive, error-prone DNA polymerase involved in untargeted mutagenesis. Copies undamaged DNA at stalled replication forks, which arise in vivo from mismatched or misaligned primer ends. These misaligned primers can be extended by PolIV. Exhibits no 3'-5' exonuclease (proofreading) activity. May be involved in translesional synthesis, in conjunction with the beta clamp from PolIII. This Dehalococcoides mccartyi (strain ATCC BAA-2266 / KCTC 15142 / 195) (Dehalococcoides ethenogenes (strain 195)) protein is DNA polymerase IV.